Reading from the N-terminus, the 558-residue chain is Serine palmitoyltransferase 1 (558 aa).

Topologically, residues methionine 1–serine 49 are lumenal. The chain crosses the membrane as a helical span at residues histidine 50–glutamine 84. Residues lysine 85–methionine 341 are Cytoplasmic-facing. Threonine 121 is modified (phosphothreonine). Residues aspartate 342–methionine 371 form a helical membrane-spanning segment. The Lumenal portion of the chain corresponds to cysteine 372–phenylalanine 424. A helical transmembrane segment spans residues alanine 425 to lysine 457. Residues phenylalanine 458 to lysine 558 are Cytoplasmic-facing.

It belongs to the class-II pyridoxal-phosphate-dependent aminotransferase family. LCB1 and LCB2 encode essential subunits of the enzyme and form a heterodimer. Component of the SPOTS complex, at least composed of LCB1/2 (LCB1 and/or LCB2), ORM1/2 (ORM1 and/or ORM2), SAC1 and TSC3. Interacts with LCB2 and TSC3. The cofactor is pyridoxal 5'-phosphate.

It is found in the cytoplasm. The protein resides in the endoplasmic reticulum membrane. The catalysed reaction is L-serine + hexadecanoyl-CoA + H(+) = 3-oxosphinganine + CO2 + CoA. The protein operates within lipid metabolism; sphingolipid metabolism. Functionally, component of serine palmitoyltransferase (SPT), which catalyzes the committed step in the synthesis of sphingolipids, the condensation of serine with palmitoyl CoA to form the long chain base 3-ketosphinganine. In Saccharomyces cerevisiae (strain ATCC 204508 / S288c) (Baker's yeast), this protein is Serine palmitoyltransferase 1 (LCB1).